The sequence spans 232 residues: 2,3,4,5-tetrahydropyridine-2,6-dicarboxylate N-acetyltransferase (232 aa).

It belongs to the transferase hexapeptide repeat family. DapH subfamily.

It catalyses the reaction (S)-2,3,4,5-tetrahydrodipicolinate + acetyl-CoA + H2O = L-2-acetamido-6-oxoheptanedioate + CoA. The protein operates within amino-acid biosynthesis; L-lysine biosynthesis via DAP pathway; LL-2,6-diaminopimelate from (S)-tetrahydrodipicolinate (acetylase route): step 1/3. Functionally, catalyzes the transfer of an acetyl group from acetyl-CoA to tetrahydrodipicolinate. In Streptococcus sanguinis (strain SK36), this protein is 2,3,4,5-tetrahydropyridine-2,6-dicarboxylate N-acetyltransferase.